Consider the following 329-residue polypeptide: Transposable element Tc3 transposase (329 aa).

Residues 2-135 (PRGSALSDTE…LEFAKNNMGT (134 aa)) mediate DNA binding.

It belongs to the transposase 5 family. Homodimer or homotetramer.

The protein resides in the nucleus. Binds specifically to the terminal nucleotides of the TC3 inverted repeat. Its expression results in frequent excision and transposition of endogenous TC3 elements. TC3 transposase acts by making double strand breaks at the ends of TC3 element. The excised element would then be inserted into a target sequence. This Caenorhabditis elegans protein is Transposable element Tc3 transposase (tc3a).